The following is a 316-amino-acid chain: uncharacterized protein (316 aa).

The next 4 membrane-spanning stretches (helical) occupy residues 74–94 (IPVLGLLTVLPLGLFIFGMAI), 99–119 (WPYAALLVFLLFLFTLLIFLG), 166–186 (MAGCAVPFFAGVGTLLGTVLG), and 188–208 (VEGFVGAVPGAAIGAMAGYIF).

The protein resides in the cell membrane. This is an uncharacterized protein from Synechocystis sp. (strain ATCC 27184 / PCC 6803 / Kazusa).